The following is an 87-amino-acid chain: Beta-toxin Ct1a (87 aa).

The N-terminal stretch at 1–19 (MNSLLMITACLALIGTVWA) is a signal peptide. Positions 20-85 (KEGYLVNHST…VWPLPKKTCN (66 aa)) constitute an LCN-type CS-alpha/beta domain. 4 cysteine pairs are disulfide-bonded: Cys-31/Cys-84, Cys-35/Cys-60, Cys-44/Cys-65, and Cys-48/Cys-67. Asn-85 carries the post-translational modification Asparagine amide.

It belongs to the long (4 C-C) scorpion toxin superfamily. Sodium channel inhibitor family. Beta subfamily. Expressed by the venom gland.

It is found in the secreted. Beta toxins bind voltage-independently at site-4 of sodium channels (Nav) and shift the voltage of activation toward more negative potentials thereby affecting sodium channel activation and promoting spontaneous and repetitive firing. Is lethal to mice but does not show toxicity to freshwater shrimp and crickets. The sequence is that of Beta-toxin Ct1a from Centruroides tecomanus (Scorpion).